The primary structure comprises 362 residues: Adenosine deaminase (362 aa).

H19 and H21 together coordinate Zn(2+). Substrate contacts are provided by H21, D23, and G181. H208 contacts Zn(2+). Catalysis depends on E211, which acts as the Proton donor. D300 is a binding site for Zn(2+).

Belongs to the metallo-dependent hydrolases superfamily. Adenosine and AMP deaminases family. Adenosine deaminase subfamily. Zn(2+) is required as a cofactor.

It catalyses the reaction adenosine + H2O + H(+) = inosine + NH4(+). The catalysed reaction is 2'-deoxyadenosine + H2O + H(+) = 2'-deoxyinosine + NH4(+). Catalyzes the hydrolytic deamination of adenosine and 2-deoxyadenosine. This Mycolicibacterium gilvum (strain PYR-GCK) (Mycobacterium gilvum (strain PYR-GCK)) protein is Adenosine deaminase.